We begin with the raw amino-acid sequence, 222 residues long: 7-cyano-7-deazaguanine synthase (222 aa).

11–21 (LSGGMDSAVLL) contributes to the ATP binding site. The Zn(2+) site is built by Cys-192, Cys-200, Cys-203, and Cys-206.

Belongs to the QueC family. It depends on Zn(2+) as a cofactor.

It carries out the reaction 7-carboxy-7-deazaguanine + NH4(+) + ATP = 7-cyano-7-deazaguanine + ADP + phosphate + H2O + H(+). The protein operates within purine metabolism; 7-cyano-7-deazaguanine biosynthesis. Its function is as follows. Catalyzes the ATP-dependent conversion of 7-carboxy-7-deazaguanine (CDG) to 7-cyano-7-deazaguanine (preQ(0)). The chain is 7-cyano-7-deazaguanine synthase from Sulfurihydrogenibium sp. (strain YO3AOP1).